We begin with the raw amino-acid sequence, 380 residues long: Cytochrome b (380 aa).

A run of 4 helical transmembrane segments spans residues 34–54 (FGSLLGICLMTQILTGLLLAM), 78–99 (WLIRNLHANGASFFFICIYLHI), 114–134 (WNTGIILLLTLMATAFVGYVL), and 179–199 (FFALHFLLPFAIAGLTLIHLT). The heme b site is built by histidine 84 and histidine 98. Residues histidine 183 and histidine 197 each contribute to the heme b site. Histidine 202 contributes to the a ubiquinone binding site. Transmembrane regions (helical) follow at residues 227 to 247 (LKDILGFTLMVLPLTSLALFS), 289 to 309 (LGGVLALAASVLVLFLSPFLH), 321 to 341 (LSQLLFWILVTNLFILTWVGS), and 348 to 368 (FIIIGQLASITYFTILLILFP).

This sequence belongs to the cytochrome b family. The cytochrome bc1 complex contains 11 subunits: 3 respiratory subunits (MT-CYB, CYC1 and UQCRFS1), 2 core proteins (UQCRC1 and UQCRC2) and 6 low-molecular weight proteins (UQCRH/QCR6, UQCRB/QCR7, UQCRQ/QCR8, UQCR10/QCR9, UQCR11/QCR10 and a cleavage product of UQCRFS1). This cytochrome bc1 complex then forms a dimer. Requires heme b as cofactor.

Its subcellular location is the mitochondrion inner membrane. Component of the ubiquinol-cytochrome c reductase complex (complex III or cytochrome b-c1 complex) that is part of the mitochondrial respiratory chain. The b-c1 complex mediates electron transfer from ubiquinol to cytochrome c. Contributes to the generation of a proton gradient across the mitochondrial membrane that is then used for ATP synthesis. The chain is Cytochrome b (MT-CYB) from Macronectes halli (Hall's giant petrel).